Reading from the N-terminus, the 60-residue chain is Large ribosomal subunit protein bL32 (60 aa).

The interval 1–21 (MAVPARHTSKAKKNKRRTHYK) is disordered. Residues 7–20 (HTSKAKKNKRRTHY) are compositionally biased toward basic residues.

The protein belongs to the bacterial ribosomal protein bL32 family.

The chain is Large ribosomal subunit protein bL32 from Streptococcus equi subsp. zooepidemicus (strain H70).